A 374-amino-acid polypeptide reads, in one-letter code: Wnt inhibitory factor 1 (374 aa).

The signal sequence occupies residues 1-28; sequence MSLTGYFAAPLCSIFLFILAHADAGQQE. The WIF domain occupies 33-172; that stretch reads MWIDAHQARV…PQNAIFFKTC (140 aa). N-linked (GlcNAc...) asparagine glycosylation is present at N83. 7 cysteine pairs are disulfide-bonded: C135/C172, C177/C187, C181/C193, C195/C204, C209/C219, C213/C225, and C227/C236. 5 consecutive EGF-like domains span residues 173–205, 208–237, 237–269, 270–301, and 302–333; these read QQAK…PHCE, LCMP…INCD, DKVN…EQCE, TSKC…DLCS, and KPVC…RYCN. N240 carries N-linked (GlcNAc...) asparagine glycosylation. 9 cysteine pairs are disulfide-bonded: C241–C251, C245–C257, C259–C268, C273–C283, C277–C289, C291–C300, C305–C315, C309–C321, and C323–C332. Residues 343–374 are disordered; sequence ALRPTGSRNRQHTPSPKRTEDRQALPESNYIW. A compositionally biased stretch (polar residues) spans 348-358; that stretch reads GSRNRQHTPSP.

During somatogenesis, expressed predominantly in unsegmented paraxial presomitic mesoderm and, to a much lesser extent, in newly segmented somites.

Its subcellular location is the secreted. Functionally, binds to WNT proteins and inhibits their activities. May be involved in mesoderm segmentation. This chain is Wnt inhibitory factor 1 (wif1), found in Xenopus laevis (African clawed frog).